The following is an 882-amino-acid chain: Translation initiation factor IF-2 (882 aa).

Disordered stretches follow at residues Pro95 to Leu176 and Glu229 to Gln289. Positions Thr116–Ser133 are enriched in polar residues. Composition is skewed to basic and acidic residues over residues Lys137–Glu172 and Glu229–Arg246. A compositionally biased stretch (basic residues) spans Arg247 to Asn262. Basic and acidic residues predominate over residues Lys263–Ala276. Residues His382–Lys551 enclose the tr-type G domain. A G1 region spans residues Gly391–Thr398. Gly391–Thr398 provides a ligand contact to GTP. Residues Gly416–His420 are G2. Residues Asp437 to Gly440 form a G3 region. GTP-binding positions include Asp437–His441 and Asn491–Asp494. Residues Asn491–Asp494 are G4. The G5 stretch occupies residues Ser527 to Lys529.

This sequence belongs to the TRAFAC class translation factor GTPase superfamily. Classic translation factor GTPase family. IF-2 subfamily.

It is found in the cytoplasm. Its function is as follows. One of the essential components for the initiation of protein synthesis. Protects formylmethionyl-tRNA from spontaneous hydrolysis and promotes its binding to the 30S ribosomal subunits. Also involved in the hydrolysis of GTP during the formation of the 70S ribosomal complex. This chain is Translation initiation factor IF-2, found in Hamiltonella defensa subsp. Acyrthosiphon pisum (strain 5AT).